A 328-amino-acid polypeptide reads, in one-letter code: Biotin synthase (328 aa).

The Radical SAM core domain occupies 48-278 (FTGNSASLCS…GKSLSVCGGR (231 aa)). [4Fe-4S] cluster contacts are provided by cysteine 66, cysteine 70, and cysteine 73. Residues serine 143 and cysteine 203 each coordinate [2Fe-2S] cluster.

Belongs to the radical SAM superfamily. Biotin synthase family. Homodimer. It depends on [4Fe-4S] cluster as a cofactor. [2Fe-2S] cluster is required as a cofactor.

The enzyme catalyses (4R,5S)-dethiobiotin + (sulfur carrier)-SH + 2 reduced [2Fe-2S]-[ferredoxin] + 2 S-adenosyl-L-methionine = (sulfur carrier)-H + biotin + 2 5'-deoxyadenosine + 2 L-methionine + 2 oxidized [2Fe-2S]-[ferredoxin]. It participates in cofactor biosynthesis; biotin biosynthesis; biotin from 7,8-diaminononanoate: step 2/2. In terms of biological role, catalyzes the conversion of dethiobiotin (DTB) to biotin by the insertion of a sulfur atom into dethiobiotin via a radical-based mechanism. The polypeptide is Biotin synthase (Pelobacter propionicus (strain DSM 2379 / NBRC 103807 / OttBd1)).